A 98-amino-acid polypeptide reads, in one-letter code: Large ribosomal subunit protein eL21 (98 aa).

A compositionally biased stretch (basic residues) spans 1–24 (MVKKAHSFRRKTRGKLSKHPRRRG). Residues 1–27 (MVKKAHSFRRKTRGKLSKHPRRRGLPP) are disordered.

It belongs to the eukaryotic ribosomal protein eL21 family.

The polypeptide is Large ribosomal subunit protein eL21 (Thermococcus gammatolerans (strain DSM 15229 / JCM 11827 / EJ3)).